Here is a 446-residue protein sequence, read N- to C-terminus: 6-methylsalicylate 1-monooxygenase atA (446 aa).

The helical transmembrane segment at 7 to 27 threads the bilayer; sequence VSVAIIGGGIGGLSLAIGLLQ. The FAD site is built by E37 and A50. An N-linked (GlcNAc...) asparagine glycan is attached at N107. R116 provides a ligand contact to FAD. R200 is an active-site residue. D311 and A324 together coordinate FAD.

The protein belongs to the paxM FAD-dependent monooxygenase family. The cofactor is FAD.

The protein resides in the membrane. The catalysed reaction is 6-methylsalicylate + AH2 + O2 + H(+) = 3-methylcatechol + A + CO2 + H2O. It participates in secondary metabolite biosynthesis. 6-methylsalicylate 1-monooxygenase; part of the gene cluster that mediates the biosynthesis of terreic acid, a quinone epoxide inhibitor of Bruton's tyrosine kinase. The first step of the pathway is the synthesis of 6-methylsalicylic acid (6-MSA) by the 6-methylsalicylic acid synthase atX. In the biosynthesis of 6-MSA, atX utilizes one acetyl-CoA and three malonyl-CoAs as its substrates and catalyzes a series of programmed reactions including Claisen condensation, reduction, aldol cyclization, and the hydrolytic cleavage that yields 6-MSA. The 6-methylsalicylate 1-monooxygenase atA then catalyzes the decarboxylative hydroxylation of 6-MSA to 3-methylcatechol. The next step is the conversion of 3-methylcatechol to 3-methyl-1,2,4-benzenetriol by cytochrome P450 monooxygenase atE, which is enhanced by cytochrome P450 monooxygenase atG. Then, the epoxidase atD catalyzes the epoxidation and hydroxyl oxidation of 3-methyl-1,2,4-benzenetriol to terremutin. Lastly, GMC oxidoreductase atC oxidizes terremutin to terreic acid. The sequence is that of 6-methylsalicylate 1-monooxygenase atA from Aspergillus terreus (strain NIH 2624 / FGSC A1156).